A 338-amino-acid chain; its full sequence is Glycerol-3-phosphate dehydrogenase [NAD(P)+] (338 aa).

Residues Ser-13, Trp-14, and Lys-108 each coordinate NADPH. Lys-108, Gly-139, and Ser-141 together coordinate sn-glycerol 3-phosphate. Ala-143 serves as a coordination point for NADPH. Positions 194, 247, 257, 258, and 259 each coordinate sn-glycerol 3-phosphate. The Proton acceptor role is filled by Lys-194. Position 258 (Arg-258) interacts with NADPH. NADPH is bound by residues Val-282 and Glu-284.

The protein belongs to the NAD-dependent glycerol-3-phosphate dehydrogenase family.

It localises to the cytoplasm. The enzyme catalyses sn-glycerol 3-phosphate + NAD(+) = dihydroxyacetone phosphate + NADH + H(+). It carries out the reaction sn-glycerol 3-phosphate + NADP(+) = dihydroxyacetone phosphate + NADPH + H(+). It functions in the pathway membrane lipid metabolism; glycerophospholipid metabolism. Catalyzes the reduction of the glycolytic intermediate dihydroxyacetone phosphate (DHAP) to sn-glycerol 3-phosphate (G3P), the key precursor for phospholipid synthesis. The sequence is that of Glycerol-3-phosphate dehydrogenase [NAD(P)+] from Listeria monocytogenes serotype 4b (strain CLIP80459).